A 199-amino-acid chain; its full sequence is Recombination protein RecR (199 aa).

The segment at 57-72 adopts a C4-type zinc-finger fold; that stretch reads CEICGNLDTKSICHIC. One can recognise a Toprim domain in the interval 80-175; sequence STIAIVETVA…KISRLASGIP (96 aa).

The protein belongs to the RecR family.

Functionally, may play a role in DNA repair. It seems to be involved in an RecBC-independent recombinational process of DNA repair. It may act with RecF and RecO. This Rickettsia prowazekii (strain Madrid E) protein is Recombination protein RecR.